We begin with the raw amino-acid sequence, 497 residues long: ATP synthase subunit alpha, chloroplastic (497 aa).

170–177 is an ATP binding site; sequence GDRQTGKT.

It belongs to the ATPase alpha/beta chains family. In terms of assembly, F-type ATPases have 2 components, CF(1) - the catalytic core - and CF(0) - the membrane proton channel. CF(1) has five subunits: alpha(3), beta(3), gamma(1), delta(1), epsilon(1). CF(0) has four main subunits: a, b, b' and c.

The protein resides in the plastid. Its subcellular location is the chloroplast thylakoid membrane. The enzyme catalyses ATP + H2O + 4 H(+)(in) = ADP + phosphate + 5 H(+)(out). Produces ATP from ADP in the presence of a proton gradient across the membrane. The alpha chain is a regulatory subunit. In Bigelowiella natans (Pedinomonas minutissima), this protein is ATP synthase subunit alpha, chloroplastic.